The chain runs to 137 residues: Large ribosomal subunit protein uL16 (137 aa).

It belongs to the universal ribosomal protein uL16 family. Part of the 50S ribosomal subunit.

Binds 23S rRNA and is also seen to make contacts with the A and possibly P site tRNAs. This chain is Large ribosomal subunit protein uL16, found in Stenotrophomonas maltophilia (strain R551-3).